A 1115-amino-acid chain; its full sequence is Tbc2 translation factor, chloroplastic (1115 aa).

Low complexity-rich tracts occupy residues 69–87 and 163–175; these read TASV…QLSS and RRAG…SGRA. Disordered stretches follow at residues 69-90 and 163-210; these read TASV…SKAL and RRAG…SSSS. Residues 176–186 show a composition bias toward gly residues; that stretch reads RGWGSGPGRNG. Low complexity predominate over residues 187 to 210; it reads SGSSSVSVNGSGSSSNGSSSSSSS. A run of 9 repeats spans residues 483 to 521, 607 to 645, 685 to 723, 724 to 763, 764 to 803, 804 to 842, 843 to 880, 990 to 1029, and 1030 to 1068. Positions 483–1068 are 9 X 38 AA approximate repeats; that stretch reads LVLELSRARL…LRPPPEWLQA (586 aa).

As to quaternary structure, part of a 400 kDa complex which is not stably associated with RNA.

Its subcellular location is the plastid. The protein localises to the chloroplast stroma. Its function is as follows. Required for expression of the chloroplast encoded psbC mRNA, most likely for translation initiation. Interacts with the 5'-UTR of psbC. This Chlamydomonas reinhardtii (Chlamydomonas smithii) protein is Tbc2 translation factor, chloroplastic (TBC2).